Here is a 291-residue protein sequence, read N- to C-terminus: F-box protein PP2-A12 (291 aa).

One can recognise an F-box domain in the interval Lys25–Lys71.

The sequence is that of F-box protein PP2-A12 (P2A12) from Arabidopsis thaliana (Mouse-ear cress).